Reading from the N-terminus, the 597-residue chain is uncharacterized protein (597 aa).

Basic and acidic residues predominate over residues 1-23 (MSHEGSRQARDRGVTRSKAEKAR). Disordered stretches follow at residues 1–32 (MSHE…VPQV) and 171–192 (RESQ…NPRP). Over residues 175–186 (EPTQSSEPSAEP) the composition is skewed to low complexity. Residues Ser237 and Ser241 each carry the phosphoserine modification. Disordered regions lie at residues 302 to 335 (SLLS…MRLD) and 549 to 569 (EAEE…GVSK). Positions 557-568 (APEQQPIQTGVS) are enriched in polar residues.

This is an uncharacterized protein from Rattus norvegicus (Rat).